We begin with the raw amino-acid sequence, 324 residues long: DNA primase small subunit PriS (324 aa).

Catalysis depends on residues Asp94, Asp96, and Asp274.

Belongs to the eukaryotic-type primase small subunit family. Heterodimer of a small subunit (PriS) and a large subunit (PriL). It depends on Mg(2+) as a cofactor. The cofactor is Mn(2+).

Its function is as follows. Catalytic subunit of DNA primase, an RNA polymerase that catalyzes the synthesis of short RNA molecules used as primers for DNA polymerase during DNA replication. The small subunit contains the primase catalytic core and has DNA synthesis activity on its own. Binding to the large subunit stabilizes and modulates the activity, increasing the rate of DNA synthesis while decreasing the length of the DNA fragments, and conferring RNA synthesis capability. The DNA polymerase activity may enable DNA primase to also catalyze primer extension after primer synthesis. May also play a role in DNA repair. The sequence is that of DNA primase small subunit PriS from Methanobrevibacter smithii (strain ATCC 35061 / DSM 861 / OCM 144 / PS).